The chain runs to 127 residues: Large ribosomal subunit protein bL12 (127 aa).

The protein belongs to the bacterial ribosomal protein bL12 family. Homodimer. Part of the ribosomal stalk of the 50S ribosomal subunit. Forms a multimeric L10(L12)X complex, where L10 forms an elongated spine to which 2 to 4 L12 dimers bind in a sequential fashion. Binds GTP-bound translation factors.

Functionally, forms part of the ribosomal stalk which helps the ribosome interact with GTP-bound translation factors. Is thus essential for accurate translation. This Syntrophotalea carbinolica (strain DSM 2380 / NBRC 103641 / GraBd1) (Pelobacter carbinolicus) protein is Large ribosomal subunit protein bL12.